An 84-amino-acid polypeptide reads, in one-letter code: Small ribosomal subunit protein bS18A (84 aa).

This sequence belongs to the bacterial ribosomal protein bS18 family. As to quaternary structure, part of the 30S ribosomal subunit. Forms a tight heterodimer with protein bS6.

In terms of biological role, binds as a heterodimer with protein bS6 to the central domain of the 16S rRNA, where it helps stabilize the platform of the 30S subunit. The sequence is that of Small ribosomal subunit protein bS18A from Mycolicibacterium paratuberculosis (strain ATCC BAA-968 / K-10) (Mycobacterium paratuberculosis).